The primary structure comprises 542 residues: Retron Ec83 probable ATPase (542 aa).

Positions 92–99 (GNNGCGKS) match the ATP-binding motif.

Its function is as follows. Probable ATPase component of antiviral defense system retron Ec83, composed of a non-coding RNA (ncRNA), a reverse transcriptase (RT), this protein and a putative HNH endonuclease. Expression of retron Ec83 confers protection against bacteriophage T2, T4 and T6. At multiplicity of infection (MOI) of 0.02 cultures slow growth when infected with T4 but do not collapse, at MOI 2 cultures enter growth stasis. The chain is Retron Ec83 probable ATPase from Escherichia coli.